The chain runs to 246 residues: Large ribosomal subunit protein uL3 (246 aa).

Disordered regions lie at residues 140–162 (SHRS…NKKM) and 214–246 (ADVP…EENA). Gln-151 bears the N5-methylglutamine mark. The span at 234–246 (EAAPEAPASEENA) shows a compositional bias: low complexity.

The protein belongs to the universal ribosomal protein uL3 family. As to quaternary structure, part of the 50S ribosomal subunit. Forms a cluster with proteins L14 and L19. Methylated by PrmB.

In terms of biological role, one of the primary rRNA binding proteins, it binds directly near the 3'-end of the 23S rRNA, where it nucleates assembly of the 50S subunit. This Methylorubrum extorquens (strain CM4 / NCIMB 13688) (Methylobacterium extorquens) protein is Large ribosomal subunit protein uL3.